Reading from the N-terminus, the 373-residue chain is Cell surface Cu-only superoxide dismutase ARB_03674 (373 aa).

A signal peptide spans 1–55 (MIWKQPPRRMGEMGGSLSRRFGNAAASWAVWRVSRSCFSLLFFFYFFLFFSSSSL). Asn75 and Asn141 each carry an N-linked (GlcNAc...) asparagine glycan. Residues His194, His196, and His212 each contribute to the Cu cation site. Cys206 and Cys289 are oxidised to a cystine. Asn254 and Asn274 each carry an N-linked (GlcNAc...) asparagine glycan. His280 lines the Cu cation pocket. Asn283 and Asn291 each carry an N-linked (GlcNAc...) asparagine glycan. The tract at residues 329-348 (GHAPTISATYTPTPTPSPPA) is disordered. Residues 331-340 (APTISATYTP) show a composition bias toward low complexity. Gly352 carries the GPI-anchor amidated glycine lipid modification. The propeptide at 353–373 (AGRLVGFSLGAIMAALVPLAL) is removed in mature form.

This sequence belongs to the Cu-Zn superoxide dismutase family. Monomer. Cu cation is required as a cofactor. In terms of processing, the GPI-anchor is attached to the protein in the endoplasmic reticulum and serves to target the protein to the cell surface. There, the glucosamine-inositol phospholipid moiety is cleaved off and the GPI-modified mannoprotein is covalently attached via its lipidless GPI glycan remnant to the 1,6-beta-glucan of the outer cell wall layer.

It localises to the secreted. It is found in the cell wall. Its subcellular location is the cell membrane. It catalyses the reaction 2 superoxide + 2 H(+) = H2O2 + O2. Superoxide dismutases serve to convert damaging superoxide radicals, a key form of ROS, to less damaging hydrogen peroxide that can be converted into water by catalase action. Degrades host-derived reactive oxygen species to escape innate immune surveillance. Involved in the occurrence of miconazole-tolerant persisters in biofilms. Persisters are cells that survive high doses of an antimicrobial agent. The unusual attributes of SOD5-like fungal proteins, including the absence of zinc and an open active site that readily captures extracellular copper, make these SODs well suited to meet challenges in zinc and copper availability at the host-pathogen interface. This Arthroderma benhamiae (strain ATCC MYA-4681 / CBS 112371) (Trichophyton mentagrophytes) protein is Cell surface Cu-only superoxide dismutase ARB_03674.